We begin with the raw amino-acid sequence, 238 residues long: Large ribosomal subunit protein bL25 (238 aa).

Basic and acidic residues predominate over residues 1 to 10 (MATTVKELKA). Residues 1 to 24 (MATTVKELKATARPKSGKGAARAE) are disordered.

The protein belongs to the bacterial ribosomal protein bL25 family. CTC subfamily. As to quaternary structure, part of the 50S ribosomal subunit; part of the 5S rRNA/L5/L18/L25 subcomplex. Contacts the 5S rRNA. Binds to the 5S rRNA independently of L5 and L18.

This is one of the proteins that binds to the 5S RNA in the ribosome where it forms part of the central protuberance. This Bradyrhizobium diazoefficiens (strain JCM 10833 / BCRC 13528 / IAM 13628 / NBRC 14792 / USDA 110) protein is Large ribosomal subunit protein bL25.